The primary structure comprises 237 residues: Bax inhibitor 1 (237 aa).

At 1-29 (MNIFDRKINFDALLKFSHITPSTQQHLKK) the chain is on the cytoplasmic side. Lys7 participates in a covalent cross-link: Glycyl lysine isopeptide (Lys-Gly) (interchain with G-Cter in ubiquitin). Residues 30–50 (VYASFALCMFVAAAGAYVHVV) traverse the membrane as a helical segment. Over 51–52 (TR) the chain is Lumenal. The helical transmembrane segment at 53 to 73 (FIQAGLLSALGSLGLMIWLMA) threads the bilayer. The Cytoplasmic segment spans residues 74–86 (TPHSHETEQKRLG). A helical transmembrane segment spans residues 87–107 (LLAGFAFLTGVGLGPALDLCI). Residues 108 to 112 (AINPS) are Lumenal-facing. Residues 113–133 (ILPTAFMGTAMIFTCFTLSAL) traverse the membrane as a helical segment. At 134-139 (YARRRS) the chain is on the cytoplasmic side. A helical membrane pass occupies residues 140–160 (YLFLGGILMSAMSLMVLSSLG). Over 161–166 (NLFFGS) the chain is Lumenal. A helical membrane pass occupies residues 167-187 (IWLFQANLYVGLVVMCGFVLF). Residues 188-206 (DTQLIIEKAENGDKDYIWH) are Cytoplasmic-facing. The helical intramembrane region spans 207-227 (CVDLFSDFVTLFRKLMMILAM). Over 228 to 237 (NEKDKKKEKK) the chain is Cytoplasmic.

The protein belongs to the BI1 family. As to quaternary structure, interacts with BCL2 and BCL2L1. Interacts with ERN1. Ubiquitinated by BFAR, leading to proteasomal degradation.

The protein localises to the endoplasmic reticulum membrane. In terms of biological role, endoplasmic reticulum (ER)-resident protein that confers cellular protection as an anti-apoptotic protein by limiting multiple stress-inducing pathways surrounding the endoplasmic reticulum and mitochondria. Inhibits the activities of the key sensor for the endoplasmic reticulum unfolded protein response IRE1alpha/ERN1 both directly and by blocking BAX/BAK binding. Modulates ER calcium homeostasis by acting as a calcium-leak channel. Negatively regulates autophagy and autophagosome formation, especially during periods of nutrient deprivation, and reduces cell survival during starvation. The polypeptide is Bax inhibitor 1 (TMBIM6) (Sus scrofa (Pig)).